The chain runs to 441 residues: Keratin, type I cytoskeletal 15 (441 aa).

A head region spans residues 2–91; sequence LLLGHASTST…GGSDLLLGTS (90 aa). The coil 1A stretch occupies residues 92–127; sequence GKEAMQNLNDRLASYLDKVRSLEGKNHELELKIKDW. Residues 92 to 407 form the IF rod domain; it reads GKEAMQNLND…MLLDSEDSKG (316 aa). Residues 128-149 are linker 1; it reads YSQVIPGTGGPDARDYGHLEKE. Residues 150–241 are coil 1B; it reads IEDLQNKVNN…KNHEEDMKAA (92 aa). The interval 242–261 is linker 12; the sequence is SSGIAGQVNVELDAAPGTNL. Positions 262-403 are coil 2; the sequence is LDELDACRRD…ATYRMLLDSE (142 aa). A tail region spans residues 404 to 441; the sequence is DSKGSIINHKILTAIEKLVDGIVLSTEVLEKQIPVLSY.

This sequence belongs to the intermediate filament family. Heterotetramer of two type I and two type II keratins. Expressed in skin.

The protein is Keratin, type I cytoskeletal 15 (KRT15) of Protopterus aethiopicus (Marbled lungfish).